Here is a 554-residue protein sequence, read N- to C-terminus: CTP synthase (554 aa).

The amidoligase domain stretch occupies residues 1–265 (MTPLIFVTGG…DEIVIDQFKL (265 aa)). Serine 13 is a CTP binding site. Serine 13 serves as a coordination point for UTP. ATP-binding positions include 14-19 (SLGKGI) and aspartate 71. Mg(2+) is bound by residues aspartate 71 and glutamate 139. Residues 146-148 (DIE), 186-191 (KTKPTQ), and lysine 222 contribute to the CTP site. UTP-binding positions include 186 to 191 (KTKPTQ) and lysine 222. One can recognise a Glutamine amidotransferase type-1 domain in the interval 292–545 (TIAVVGKYVD…VKAARARKAG (254 aa)). Glycine 353 contacts L-glutamine. Cysteine 380 functions as the Nucleophile; for glutamine hydrolysis in the catalytic mechanism. L-glutamine contacts are provided by residues 381-384 (YGMQ), glutamate 404, and arginine 471. Residues histidine 518 and glutamate 520 contribute to the active site.

The protein belongs to the CTP synthase family. In terms of assembly, homotetramer.

The enzyme catalyses UTP + L-glutamine + ATP + H2O = CTP + L-glutamate + ADP + phosphate + 2 H(+). The catalysed reaction is L-glutamine + H2O = L-glutamate + NH4(+). It carries out the reaction UTP + NH4(+) + ATP = CTP + ADP + phosphate + 2 H(+). It functions in the pathway pyrimidine metabolism; CTP biosynthesis via de novo pathway; CTP from UDP: step 2/2. Allosterically activated by GTP, when glutamine is the substrate; GTP has no effect on the reaction when ammonia is the substrate. The allosteric effector GTP functions by stabilizing the protein conformation that binds the tetrahedral intermediate(s) formed during glutamine hydrolysis. Inhibited by the product CTP, via allosteric rather than competitive inhibition. Its function is as follows. Catalyzes the ATP-dependent amination of UTP to CTP with either L-glutamine or ammonia as the source of nitrogen. Regulates intracellular CTP levels through interactions with the four ribonucleotide triphosphates. The chain is CTP synthase from Xylella fastidiosa (strain 9a5c).